A 659-amino-acid chain; its full sequence is Macrolide export ATP-binding/permease protein MacB (659 aa).

An ABC transporter domain is found at 10 to 249 (IELRGIRKRY…QPLLHHAGLS (240 aa)). An ATP-binding site is contributed by 47–54 (GSSGSGKS). The next 4 helical transmembrane spans lie at 287–307 (SLTL…LAIG), 538–558 (LGLV…NVML), 594–614 (ITGG…LVFW), and 619–639 (VFSF…GLIF).

It belongs to the ABC transporter superfamily. Macrolide exporter (TC 3.A.1.122) family. As to quaternary structure, homodimer.

It is found in the cell inner membrane. Its function is as follows. Non-canonical ABC transporter that contains transmembrane domains (TMD), which form a pore in the inner membrane, and an ATP-binding domain (NBD), which is responsible for energy generation. Confers resistance against macrolides. This chain is Macrolide export ATP-binding/permease protein MacB, found in Nitrosomonas europaea (strain ATCC 19718 / CIP 103999 / KCTC 2705 / NBRC 14298).